Consider the following 86-residue polypeptide: BaSO(4)-adsorbing protein 1 (86 aa).

Intrachain disulfides connect Cys6–Cys22, Cys18–Cys49, and Cys39–Cys54. Residues Gly58–Lys86 form a disordered region. The segment covering Asp59–Ser70 has biased composition (polar residues). Positions Glu76 to Lys86 are enriched in acidic residues.

Salivary gland (at protein level).

It is found in the secreted. In terms of biological role, inhibits lectin and classical pathways of complement system activation in the host with no significant effect on the alternative pathway. Inhibits host extrinsic blood coagulation pathway but not the intrinsic cascade. Binds to neutral and negatively charged membranes in vitro; binding is reduced upon pre-incubation with Ca(2+). The polypeptide is BaSO(4)-adsorbing protein 1 (Ornithodoros savignyi (African eyed tampan)).